Reading from the N-terminus, the 435-residue chain is Probable exopolygalacturonase X (435 aa).

A signal peptide spans 1-22 (MRLTHVLSHTLGLLALGATAEA). The segment at 31 to 55 (CSPKKPFRPLPTSSSRDKTCHVRSH) is disordered. Basic and acidic residues predominate over residues 45–55 (SRDKTCHVRSH). Asn93, Asn112, Asn128, and Asn198 each carry an N-linked (GlcNAc...) asparagine glycan. 2 PbH1 repeats span residues 199-229 (SSNV…DTYR) and 230-251 (SNNI…SFKP). Catalysis depends on Asp244, which acts as the Proton donor. A disulfide bridge links Cys246 with Cys263. N-linked (GlcNAc...) asparagine glycosylation is found at Asn252 and Asn264. One copy of the PbH1 3 repeat lies at 253-273 (STNILVQNLHCNGSHGISVGS). His267 is an active-site residue. N-linked (GlcNAc...) asparagine glycans are attached at residues Asn291, Asn296, Asn328, and Asn353. The PbH1 4 repeat unit spans residues 326–347 (VKNITYDTALIDNVDWAIEITQ). One copy of the PbH1 5 repeat lies at 361–409 (PSSLTISDVHIKNFRGTTSGSEDPYVGTIVCSSPDTCSDIYTSNINVTS). Residues Cys391 and Cys397 are joined by a disulfide bond. N-linked (GlcNAc...) asparagine glycosylation is found at Asn406 and Asn429.

The protein belongs to the glycosyl hydrolase 28 family.

It is found in the secreted. The enzyme catalyses [(1-&gt;4)-alpha-D-galacturonosyl](n) + H2O = alpha-D-galacturonate + [(1-&gt;4)-alpha-D-galacturonosyl](n-1). Functionally, specific in hydrolyzing the terminal glycosidic bond of polygalacturonic acid and oligogalacturonates. This is Probable exopolygalacturonase X (pgaX) from Aspergillus niger (strain ATCC MYA-4892 / CBS 513.88 / FGSC A1513).